The primary structure comprises 211 residues: tRNA (guanine-N(7)-)-methyltransferase (211 aa).

The S-adenosyl-L-methionine site is built by E43, E68, D95, and D117. The active site involves D117. Substrate is bound by residues K121, D153, and 190–193; that span reads TEYE.

The protein belongs to the class I-like SAM-binding methyltransferase superfamily. TrmB family.

It carries out the reaction guanosine(46) in tRNA + S-adenosyl-L-methionine = N(7)-methylguanosine(46) in tRNA + S-adenosyl-L-homocysteine. It functions in the pathway tRNA modification; N(7)-methylguanine-tRNA biosynthesis. Its function is as follows. Catalyzes the formation of N(7)-methylguanine at position 46 (m7G46) in tRNA. In Staphylococcus saprophyticus subsp. saprophyticus (strain ATCC 15305 / DSM 20229 / NCIMB 8711 / NCTC 7292 / S-41), this protein is tRNA (guanine-N(7)-)-methyltransferase.